The sequence spans 115 residues: Large ribosomal subunit protein bL19 (115 aa).

It belongs to the bacterial ribosomal protein bL19 family.

In terms of biological role, this protein is located at the 30S-50S ribosomal subunit interface and may play a role in the structure and function of the aminoacyl-tRNA binding site. The sequence is that of Large ribosomal subunit protein bL19 from Bacillus pumilus (strain SAFR-032).